Reading from the N-terminus, the 342-residue chain is Flap endonuclease 1 (342 aa).

The segment at 1–99 (MGVKIGELIE…RAIEERVRAR (99 aa)) is N-domain. D28, D81, E153, E155, D174, D176, and D237 together coordinate Mg(2+). Residues 117–259 (EARKYAQAAL…RALELVKKYK (143 aa)) form an I-domain region.

It belongs to the XPG/RAD2 endonuclease family. FEN1 subfamily. As to quaternary structure, interacts with PCNA. PCNA stimulates the nuclease activity without altering cleavage specificity. Requires Mg(2+) as cofactor.

Its function is as follows. Structure-specific nuclease with 5'-flap endonuclease and 5'-3' exonuclease activities involved in DNA replication and repair. During DNA replication, cleaves the 5'-overhanging flap structure that is generated by displacement synthesis when DNA polymerase encounters the 5'-end of a downstream Okazaki fragment. Binds the unpaired 3'-DNA end and kinks the DNA to facilitate 5' cleavage specificity. Cleaves one nucleotide into the double-stranded DNA from the junction in flap DNA, leaving a nick for ligation. Also involved in the base excision repair (BER) pathway. Acts as a genome stabilization factor that prevents flaps from equilibrating into structures that lead to duplications and deletions. Also possesses 5'-3' exonuclease activity on nicked or gapped double-stranded DNA. This is Flap endonuclease 1 from Korarchaeum cryptofilum (strain OPF8).